A 245-amino-acid chain; its full sequence is uncharacterized protein (245 aa).

2 helical membrane-spanning segments follow: residues 29–51 (LVVL…RIGM) and 61–83 (TILF…LMLH).

It localises to the cell membrane. This is an uncharacterized protein from Treponema pallidum (strain Nichols).